The sequence spans 567 residues: Potassium-transporting ATPase potassium-binding subunit (567 aa).

A run of 11 helical transmembrane segments spans residues 3–23 (FIGW…VKPL), 64–84 (LTFT…IYAV), 136–156 (ALTH…MALI), 179–199 (LYVL…QGMP), 254–274 (LSNF…TNVF), 285–305 (WAIL…AYWA), 330–350 (FGIV…CGAV), 357–376 (FTAL…EIIV), 421–441 (MLAI…AVVL), 473–495 (AFGG…MFVG), and 527–547 (GGLF…LTFF).

Belongs to the KdpA family. The system is composed of three essential subunits: KdpA, KdpB and KdpC.

The protein resides in the cell inner membrane. Functionally, part of the high-affinity ATP-driven potassium transport (or Kdp) system, which catalyzes the hydrolysis of ATP coupled with the electrogenic transport of potassium into the cytoplasm. This subunit binds the periplasmic potassium ions and delivers the ions to the membrane domain of KdpB through an intramembrane tunnel. The chain is Potassium-transporting ATPase potassium-binding subunit from Rhodopseudomonas palustris (strain ATCC BAA-98 / CGA009).